The chain runs to 196 residues: ATP-dependent Clp protease proteolytic subunit (196 aa).

The active-site Nucleophile is the S96. The active site involves H121.

This sequence belongs to the peptidase S14 family. In terms of assembly, fourteen ClpP subunits assemble into 2 heptameric rings which stack back to back to give a disk-like structure with a central cavity, resembling the structure of eukaryotic proteasomes.

It localises to the cytoplasm. It catalyses the reaction Hydrolysis of proteins to small peptides in the presence of ATP and magnesium. alpha-casein is the usual test substrate. In the absence of ATP, only oligopeptides shorter than five residues are hydrolyzed (such as succinyl-Leu-Tyr-|-NHMec, and Leu-Tyr-Leu-|-Tyr-Trp, in which cleavage of the -Tyr-|-Leu- and -Tyr-|-Trp bonds also occurs).. Its function is as follows. Cleaves peptides in various proteins in a process that requires ATP hydrolysis. Has a chymotrypsin-like activity. Plays a major role in the degradation of misfolded proteins. This Streptococcus gordonii (strain Challis / ATCC 35105 / BCRC 15272 / CH1 / DL1 / V288) protein is ATP-dependent Clp protease proteolytic subunit.